Reading from the N-terminus, the 261-residue chain is Cytochrome c oxidase subunit 3 (261 aa).

Topologically, residues 1 to 15 are mitochondrial matrix; the sequence is MAHQAHAYHMVDPSP. The helical transmembrane segment at 16-34 threads the bilayer; that stretch reads WPITGATAALLVTSGLAAW. At 35-40 the chain is on the mitochondrial intermembrane side; that stretch reads FHFNSM. The chain crosses the membrane as a helical span at residues 41-66; sequence ILILMGLTLLLLTMYQWWRDIIREST. The Mitochondrial matrix segment spans residues 67-72; it reads FQGHHT. Residues 73–105 form a helical membrane-spanning segment; it reads LPVQKSLRYGMILFITSEVFFFLGFFWAFYHSS. The Mitochondrial intermembrane portion of the chain corresponds to 106 to 128; sequence LAPTPELGGLWPPTGITPLDPFE. The chain crosses the membrane as a helical span at residues 129-152; the sequence is VPLLNTAVLLASGITVTWAHHSLM. Residues 153–155 are Mitochondrial matrix-facing; the sequence is EGQ. A helical membrane pass occupies residues 156 to 183; the sequence is RKEAIQSLFITVLLGLYFTALQATEYYE. The Mitochondrial intermembrane portion of the chain corresponds to 184–190; that stretch reads SPFTIAD. A helical membrane pass occupies residues 191 to 223; that stretch reads GAYGSTFFVATGFHGLHVIIGSTFLIVCLVRQT. At 224-232 the chain is on the mitochondrial matrix side; sequence QYHFTSNHH. A helical membrane pass occupies residues 233–256; it reads FGFEAAAWYWHFVDVVWLFLYVSI. The Mitochondrial intermembrane portion of the chain corresponds to 257 to 261; it reads YWWGS.

It belongs to the cytochrome c oxidase subunit 3 family. Component of the cytochrome c oxidase (complex IV, CIV), a multisubunit enzyme composed of 14 subunits. The complex is composed of a catalytic core of 3 subunits MT-CO1, MT-CO2 and MT-CO3, encoded in the mitochondrial DNA, and 11 supernumerary subunits COX4I, COX5A, COX5B, COX6A, COX6B, COX6C, COX7A, COX7B, COX7C, COX8 and NDUFA4, which are encoded in the nuclear genome. The complex exists as a monomer or a dimer and forms supercomplexes (SCs) in the inner mitochondrial membrane with NADH-ubiquinone oxidoreductase (complex I, CI) and ubiquinol-cytochrome c oxidoreductase (cytochrome b-c1 complex, complex III, CIII), resulting in different assemblies (supercomplex SCI(1)III(2)IV(1) and megacomplex MCI(2)III(2)IV(2)).

The protein localises to the mitochondrion inner membrane. The enzyme catalyses 4 Fe(II)-[cytochrome c] + O2 + 8 H(+)(in) = 4 Fe(III)-[cytochrome c] + 2 H2O + 4 H(+)(out). Functionally, component of the cytochrome c oxidase, the last enzyme in the mitochondrial electron transport chain which drives oxidative phosphorylation. The respiratory chain contains 3 multisubunit complexes succinate dehydrogenase (complex II, CII), ubiquinol-cytochrome c oxidoreductase (cytochrome b-c1 complex, complex III, CIII) and cytochrome c oxidase (complex IV, CIV), that cooperate to transfer electrons derived from NADH and succinate to molecular oxygen, creating an electrochemical gradient over the inner membrane that drives transmembrane transport and the ATP synthase. Cytochrome c oxidase is the component of the respiratory chain that catalyzes the reduction of oxygen to water. Electrons originating from reduced cytochrome c in the intermembrane space (IMS) are transferred via the dinuclear copper A center (CU(A)) of subunit 2 and heme A of subunit 1 to the active site in subunit 1, a binuclear center (BNC) formed by heme A3 and copper B (CU(B)). The BNC reduces molecular oxygen to 2 water molecules using 4 electrons from cytochrome c in the IMS and 4 protons from the mitochondrial matrix. This Latimeria chalumnae (Coelacanth) protein is Cytochrome c oxidase subunit 3 (MT-CO3).